Here is a 119-residue protein sequence, read N- to C-terminus: Large ribosomal subunit protein bL19 (119 aa).

Belongs to the bacterial ribosomal protein bL19 family.

In terms of biological role, this protein is located at the 30S-50S ribosomal subunit interface and may play a role in the structure and function of the aminoacyl-tRNA binding site. This is Large ribosomal subunit protein bL19 (rplS) from Mycoplasma genitalium (strain ATCC 33530 / DSM 19775 / NCTC 10195 / G37) (Mycoplasmoides genitalium).